Consider the following 425-residue polypeptide: Non-structural protein 2 (425 aa).

Residues 29-64 (VSFDELVALREENAKLKQENEALKAKLHRLESDWTT) are a coiled coil.

This Banna virus (BAV) protein is Non-structural protein 2 (Segment-6).